Reading from the N-terminus, the 502-residue chain is Protein GIS3 (502 aa).

It is found in the cytoplasm. It localises to the nucleus. The polypeptide is Protein GIS3 (GIS3) (Saccharomyces cerevisiae (strain ATCC 204508 / S288c) (Baker's yeast)).